A 21-amino-acid chain; its full sequence is Dahlein-5.4 (21 aa).

In terms of tissue distribution, expressed by the skin dorsal glands.

The protein localises to the secreted. In terms of biological role, has no antimicrobial activity. Strongly inhibits the formation of NO by neuronal nitric oxide synthase at micromolar concentrations. The sequence is that of Dahlein-5.4 from Ranoidea dahlii (Dahl's aquatic frog).